Here is a 745-residue protein sequence, read N- to C-terminus: MVKVSNLGYPRLGEQREWKQAIEAFWAGNLEQKDLEKQLKQLRINHLKKQKEAGIDLIPVGDFSCYDHVLDLSFQFNVIPKRFDEYERNLDLYFAIARGDKDNVASSMKKWFNTNYHYIVPEWEVETKPHLQNNYLLDLYLEAREVVGDKAKPVITGPITYVSLSSGIVDFEATVQRLLPLYKQVFQDLIDAGATYIQIDEPIFVTDEGELLVDIAKSVYDFFAREVPQAHFIFQTYFESAVCLDKLSKLPVTGFGLDFIHGRAENLAAVKQGLFREKELFAGIVNGRNIWAVNLEETLALLEEIGPFVKRLTLQPSSSLLHVPVTTKYETHLDPVLKNGLSFADEKLKELELLASAFDGNKTKGYHEALSRFSALQAADFRHVALESLAEVKLERSPYKLRQALQAEKLQLPILPTTTIGSFPQSPEIRKKRLAWKRGNLSDSDYKDFIKTEIRRWIAIQEDLDLDVLVHGEFERVDMVEFFGQKLAGFTTTKLGWVQSYGSRAVKPPIIYGDVKHIQPLSLEETVYAQSLTKKPVKGMLTGPITITNWSFERDDISRSDLFNQIALAIKDEIQLLEQSGIAIIQVDEAALREGLPLRQQKQQAYLDDAVAAFKIATSSVKDETQIHTHMCYSKFDEIIDSIRALDADVISIETSRSHGDIIESFETAVYPLGIGLGVYDIHSPRIPTKEEIIVNIQRSLKCLSKEQFWVNPDCGLKTRREAETIAALEVLVSATKEVRQQLDN.

Residues 16–19 (REWK) and Lys-110 contribute to the 5-methyltetrahydropteroyltri-L-glutamate site. L-homocysteine contacts are provided by residues 420–422 (IGS) and Glu-473. L-methionine is bound by residues 420 to 422 (IGS) and Glu-473. 5-methyltetrahydropteroyltri-L-glutamate is bound at residue Trp-550. Asp-588 contacts L-homocysteine. Asp-588 contributes to the L-methionine binding site. Glu-594 provides a ligand contact to 5-methyltetrahydropteroyltri-L-glutamate. Zn(2+)-binding residues include His-630, Cys-632, and Glu-654. His-683 functions as the Proton donor in the catalytic mechanism. Residue Cys-715 participates in Zn(2+) binding.

It belongs to the vitamin-B12 independent methionine synthase family. Requires Zn(2+) as cofactor.

The catalysed reaction is 5-methyltetrahydropteroyltri-L-glutamate + L-homocysteine = tetrahydropteroyltri-L-glutamate + L-methionine. It functions in the pathway amino-acid biosynthesis; L-methionine biosynthesis via de novo pathway; L-methionine from L-homocysteine (MetE route): step 1/1. Functionally, catalyzes the transfer of a methyl group from 5-methyltetrahydrofolate to homocysteine resulting in methionine formation. This Streptococcus agalactiae serotype III (strain NEM316) protein is 5-methyltetrahydropteroyltriglutamate--homocysteine methyltransferase.